Here is a 391-residue protein sequence, read N- to C-terminus: MEKAIRNFLSQESAGGILLLVAVALAMLLANSPLSGLYQGFLNTEMQVRFGALDINKPLLLWINDGLMALFFLLIGLEVKRELLEGALSSPSKASLPTFAAIGGMLVPAAIYLFFNFDDPVTKVGWAIPAATDIAFALGIMALLGNRVPVALKVFLLALAIIDDLGVIVIIALFYSTDLSMLSLVIAAIAVTGLVALNRKGVTSLAPYGVLGIILWIAVLKSGVHATLAGVVIAFCIPLRAKDGSSPSEHLEHSLHPWSNFLILPVFAFANAGVPLGNVGFDSILSPVPVGIALGLLLGKPIGVLLFSYAAVKLRLAELPKGIGWHQIAPVAVMCGIGFTMSMFIASLAFEHGGELYGDLARIGILLGSLFAAVIGYFWLSKVLPKAGERI.

Helical transmembrane passes span 14 to 34 (AGGILLLVAVALAMLLANSPL), 59 to 79 (LLLWINDGLMALFFLLIGLEV), 95 to 115 (SLPTFAAIGGMLVPAAIYLFF), 124 to 144 (VGWAIPAATDIAFALGIMALL), 154 to 174 (VFLLALAIIDDLGVIVIIALF), 177 to 197 (TDLSMLSLVIAAIAVTGLVAL), 213 to 233 (IILWIAVLKSGVHATLAGVVI), 261 to 281 (FLILPVFAFANAGVPLGNVGF), 287 to 307 (PVPVGIALGLLLGKPIGVLLF), 328 to 348 (IAPVAVMCGIGFTMSMFIASL), and 363 to 383 (IGILLGSLFAAVIGYFWLSKV).

This sequence belongs to the NhaA Na(+)/H(+) (TC 2.A.33) antiporter family.

It is found in the cell inner membrane. The enzyme catalyses Na(+)(in) + 2 H(+)(out) = Na(+)(out) + 2 H(+)(in). In terms of biological role, na(+)/H(+) antiporter that extrudes sodium in exchange for external protons. The protein is Na(+)/H(+) antiporter NhaA of Shewanella amazonensis (strain ATCC BAA-1098 / SB2B).